Consider the following 729-residue polypeptide: MKKKAVLAEKPSVARDIARVLGCNQKGNGYLEGNGYIITWALGHLVTHADPEHYGKQYKTWKLEELPMLPKRLELVVIKQTAKQFHAVKHVLNRQDVGEVVIATDAGREGELVARWILEKAHVKKPVKRLWISSVTDKAIKDGFKQLKDGKRYETLYAAAAARAEADWYVGINGTRALTTKHNAQLSCGRVQTPTLAILADREEAIRKFVPKPYHTISVETKDGVTFRWADRRSKEERIFDDKRAKTLQEKLQQSAIVIDSVNAKTKRTPPPPLYDLTELQREANKRFGYSAKETLAALQRLYEQHKAVTYPRTDSRYLSSDLVETLKERLHAVDVQPFRKMVANAKKQGLANAKRQMVNDAKVSDHHALIPTEQPQSASAMSDKEAKLYHLIVRRFLANFFPPSESELTSVEATANGELLRAKGERLVSAGWRGQETGEEDEALARLLPAMSKGDKKAVKWVGMTQGKTSPPPRFNEGTLLAAMEKPAQHMEAKDETIKKTLAQAGGIGTVATRADIIEKLFSSFYIEKKGKDLYITSKGKQLLELVPAELKSPALTAEWEQRLEKIVQGKEQKQMFIAEMKEYAKAVVAQVKADTATFRHDNKTGEKCPECGKFLLEVNGKKGKMRVCQDRECGYRKNIAMTTNARCPKCKKKLELRGEGEGQVFACVCGHREKKAQFEQRRKQNKHKNVSKREVQSYMKKQNKQDQFANSALADQLAKLGLKGDDS.

Residues Lys3–Thr136 form the Toprim domain. Mg(2+) is bound by residues Glu9 and Asp105. One can recognise a Topo IA-type catalytic domain in the interval Tyr153–Val590. Residues Ser187–Gln192 form an interaction with DNA region. The active-site O-(5'-phospho-DNA)-tyrosine intermediate is the Tyr311. Residues Phe680–Asp708 are disordered.

This sequence belongs to the type IA topoisomerase family. It depends on Mg(2+) as a cofactor.

It carries out the reaction ATP-independent breakage of single-stranded DNA, followed by passage and rejoining.. Functionally, releases the supercoiling and torsional tension of DNA, which is introduced during the DNA replication and transcription, by transiently cleaving and rejoining one strand of the DNA duplex. Introduces a single-strand break via transesterification at a target site in duplex DNA. The scissile phosphodiester is attacked by the catalytic tyrosine of the enzyme, resulting in the formation of a DNA-(5'-phosphotyrosyl)-enzyme intermediate and the expulsion of a 3'-OH DNA strand. The free DNA strand then undergoes passage around the unbroken strand, thus removing DNA supercoils. Finally, in the religation step, the DNA 3'-OH attacks the covalent intermediate to expel the active-site tyrosine and restore the DNA phosphodiester backbone. This Shouchella clausii (strain KSM-K16) (Alkalihalobacillus clausii) protein is DNA topoisomerase 3.